The following is a 658-amino-acid chain: MAKVAQIRAIVEQLKRYDYHYYVLDDPLVSDFEYDQLYKQLQALEQAHPELIQPDSPTQRVGGIVVEAFNKFPHQNPMLSLDNAFDTATIASFIANINNLTGVQNRFVVEPKIDGVSISLTYENGLLTRALTRGDGLVGEDVLSNVKTIKSIPLTIPFHKQVEIRGEIFVDKKTFAQINENLAKPFANARNLAAGTLRNLNSEVSAKRKLKAFFYFVPNALTLGCRSQSAVLAQLKQWNFPVSKAVASFDRPEALIEYLEQFDQTRDQLNFQVDGLVVKLDNFHFYDQLGFTSKFPRWALAYKFKPKFVQTKLRGVLVTVGRTGKINYTAQLDPVNLEGTVVSAATLHNFDYIKEKDIRLNDTVIIYKAGEIIPKVLEVCLPLRTAANQPIPEQTHCPACQAPLVQYKDEVDQYCTNERCDQRNLEAINYFVSKTAMDIQGLSIQTISKLYENNLVRSVVDLYHLKEHKAAVLALELKIGEVLFNKLISSIEQSKTKGMARLLTGLGIKHVGQVLAKSLTKHFENIDALQSASMETLLELPDVGPTVAESLFNWFHNDNNLQLLAALKAVGVQMDALKSNTNFDTASIYFQKSFVITGSFPISRDTIKNLLVNKYDCRFTNNVTSKVDFVLAGIKATPRKLEQAKALNIPIINEPIWT.

NAD(+) contacts are provided by residues 31 to 35, 80 to 81, and Glu-110; these read DFEYD and SL. Residue Lys-112 is the N6-AMP-lysine intermediate of the active site. Positions 133, 167, 279, and 303 each coordinate NAD(+). Zn(2+) is bound by residues Cys-397, Cys-400, Cys-415, and Cys-420. A BRCT domain is found at 584-654; the sequence is DTASIYFQKS…KALNIPIINE (71 aa).

Belongs to the NAD-dependent DNA ligase family. LigA subfamily. The cofactor is Mg(2+). Requires Mn(2+) as cofactor.

It carries out the reaction NAD(+) + (deoxyribonucleotide)n-3'-hydroxyl + 5'-phospho-(deoxyribonucleotide)m = (deoxyribonucleotide)n+m + AMP + beta-nicotinamide D-nucleotide.. In terms of biological role, DNA ligase that catalyzes the formation of phosphodiester linkages between 5'-phosphoryl and 3'-hydroxyl groups in double-stranded DNA using NAD as a coenzyme and as the energy source for the reaction. It is essential for DNA replication and repair of damaged DNA. This chain is DNA ligase, found in Mycoplasma pneumoniae (strain ATCC 29342 / M129 / Subtype 1) (Mycoplasmoides pneumoniae).